The sequence spans 617 residues: MKQSKMPIPTLREMPSDAQVISHALMLRAGYVRQVSAGVYSYLPLANRVIEKAKNIMRQEFEKIGAVEMLAPALLSAELWRESGRYETYGEDLYKLKNREKSDFILGPTHEETFTAIVRDSVKSYKQLPLNLYQIQPKYRDEKRPRNGLLRTREFIMKDAYSFHANYDSLDSVYDEYKAAYERIFTRSGLDFKAIIGDGGAMGGKDSQEFMAITSARTDLDRWVVLDKSVASFDEIPAEVQEEIKAELLKWIVSGEDTIAYSSESSYAANLEMATNEYKPSNRVVAEEEVTRVATPDVKSIDEVAAFLNVPEEQTIKTLFYIADGELVAALLVGNDQLNEVKLKNHLGADFFDVASEEEVANVVQAGFGSLGPVGLPENIKIIADRKVQDVRNAVVGANEDGYHLTGVNPGRDFTSEYVDIREVREGEISPDGQGVLNFARGIEIGHIFKLGTRYSASMGADVLDENGRAVPIIMGCYGIGVSRLLSAVMEQHARLFVNKTPKGEYRYAWGINFPKELAPFDVHLITVNVKDEEAQALTEKLEASLMGAGYEVLTDDRNERVGVKFSDSDLIGLPIRITVGKKAADGIVEVKIKATGDTIEVHADNVLETLEILSKK.

The protein belongs to the class-II aminoacyl-tRNA synthetase family. ProS type 1 subfamily. Homodimer.

It is found in the cytoplasm. The enzyme catalyses tRNA(Pro) + L-proline + ATP = L-prolyl-tRNA(Pro) + AMP + diphosphate. Its function is as follows. Catalyzes the attachment of proline to tRNA(Pro) in a two-step reaction: proline is first activated by ATP to form Pro-AMP and then transferred to the acceptor end of tRNA(Pro). As ProRS can inadvertently accommodate and process non-cognate amino acids such as alanine and cysteine, to avoid such errors it has two additional distinct editing activities against alanine. One activity is designated as 'pretransfer' editing and involves the tRNA(Pro)-independent hydrolysis of activated Ala-AMP. The other activity is designated 'posttransfer' editing and involves deacylation of mischarged Ala-tRNA(Pro). The misacylated Cys-tRNA(Pro) is not edited by ProRS. In Streptococcus pneumoniae serotype 19F (strain G54), this protein is Proline--tRNA ligase.